The chain runs to 484 residues: Cobyric acid synthase (484 aa).

Residues S253 to F430 enclose the GATase cobBQ-type domain. C334 serves as the catalytic Nucleophile. The active site involves H422.

Belongs to the CobB/CobQ family. CobQ subfamily.

Its pathway is cofactor biosynthesis; adenosylcobalamin biosynthesis. Its function is as follows. Catalyzes amidations at positions B, D, E, and G on adenosylcobyrinic A,C-diamide. NH(2) groups are provided by glutamine, and one molecule of ATP is hydrogenolyzed for each amidation. This chain is Cobyric acid synthase, found in Cutibacterium acnes (strain DSM 16379 / KPA171202) (Propionibacterium acnes).